The primary structure comprises 312 residues: Urease accessory protein 7 (312 aa).

The interval 28–86 (QEATGTDSHHAHHHHTPSGASSAISHTHDNMPHDHGQFHDHGPGLWTPEEHGHTHEHLE) is disordered. The tract at residues 36–87 (HHAHHHHTPSGASSAISHTHDNMPHDHGQFHDHGPGLWTPEEHGHTHEHLEH) is histine rich nickel-binding domain. Residues 53–86 (HTHDNMPHDHGQFHDHGPGLWTPEEHGHTHEHLE) show a composition bias toward basic and acidic residues. The short motif at 115–122 (GPVGSGKT) is the GTP binding P-loop element. A Switch domain 1 motif is present at residues 147–154 (TREDQEFL). The short motif at 171–172 (GG) is the switch domain 2 element.

The protein belongs to the SIMIBI class G3E GTPase family. UreG subfamily. In terms of assembly, URE4, URE6 and URE7 may form a complex that acts as a GTP-hydrolysis-dependent molecular chaperone, activating the urease apoprotein URE1.

Its function is as follows. Urease accessory protein that binds 2 nickel atoms likely via its conserved histidine-rich domain and supplies nickel for the functional urease URE1. Has probably a dual function as a nickel chaperone and GTPase. Plays a role in host brain invasion. This Cryptococcus neoformans var. grubii serotype A (strain H99 / ATCC 208821 / CBS 10515 / FGSC 9487) (Filobasidiella neoformans var. grubii) protein is Urease accessory protein 7.